Consider the following 216-residue polypeptide: Phosphatidylserine decarboxylase proenzyme (216 aa).

Serine 185 functions as the Schiff-base intermediate with substrate; via pyruvic acid in the catalytic mechanism. Position 185 is a pyruvic acid (Ser); by autocatalysis (serine 185).

It belongs to the phosphatidylserine decarboxylase family. PSD-A subfamily. As to quaternary structure, heterodimer of a large membrane-associated beta subunit and a small pyruvoyl-containing alpha subunit. Pyruvate is required as a cofactor. Post-translationally, is synthesized initially as an inactive proenzyme. Formation of the active enzyme involves a self-maturation process in which the active site pyruvoyl group is generated from an internal serine residue via an autocatalytic post-translational modification. Two non-identical subunits are generated from the proenzyme in this reaction, and the pyruvate is formed at the N-terminus of the alpha chain, which is derived from the carboxyl end of the proenzyme. The post-translation cleavage follows an unusual pathway, termed non-hydrolytic serinolysis, in which the side chain hydroxyl group of the serine supplies its oxygen atom to form the C-terminus of the beta chain, while the remainder of the serine residue undergoes an oxidative deamination to produce ammonia and the pyruvoyl prosthetic group on the alpha chain.

The protein localises to the cell membrane. It carries out the reaction a 1,2-diacyl-sn-glycero-3-phospho-L-serine + H(+) = a 1,2-diacyl-sn-glycero-3-phosphoethanolamine + CO2. Its pathway is phospholipid metabolism; phosphatidylethanolamine biosynthesis; phosphatidylethanolamine from CDP-diacylglycerol: step 2/2. In terms of biological role, catalyzes the formation of phosphatidylethanolamine (PtdEtn) from phosphatidylserine (PtdSer). The polypeptide is Phosphatidylserine decarboxylase proenzyme (Nitrosomonas europaea (strain ATCC 19718 / CIP 103999 / KCTC 2705 / NBRC 14298)).